We begin with the raw amino-acid sequence, 370 residues long: D-alanine--D-alanine ligase (370 aa).

One can recognise an ATP-grasp domain in the interval 142-348; sequence KQILTHHHIQ…YTALIDQLIQ (207 aa). Residue 172–227 coordinates ATP; it reads QAHVGDHLFIKPANQGSSIGIHKAENEQEYLDGLADAFKYDYKILVEESIDNPREV. Positions 302, 315, and 317 each coordinate Mg(2+).

Belongs to the D-alanine--D-alanine ligase family. It depends on Mg(2+) as a cofactor. Mn(2+) is required as a cofactor.

It localises to the cytoplasm. The catalysed reaction is 2 D-alanine + ATP = D-alanyl-D-alanine + ADP + phosphate + H(+). The protein operates within cell wall biogenesis; peptidoglycan biosynthesis. Cell wall formation. In Lactiplantibacillus plantarum (strain ATCC BAA-793 / NCIMB 8826 / WCFS1) (Lactobacillus plantarum), this protein is D-alanine--D-alanine ligase.